A 386-amino-acid polypeptide reads, in one-letter code: N-acetylneuraminate epimerase (386 aa).

A signal peptide spans 1–29 (MGMQMKNSKKMMTLMALCLSVAITTSGYA). Kelch repeat units lie at residues 51 to 95 (VIYV…VFLN), 97 to 149 (ELYV…VKLN), 151 to 186 (TMALITGGVNEHIFDKYFIDIAAAAGDDSEKNRVIY), 187 to 232 (NYFN…AMEN), 235 to 284 (LTLI…LAGA), 306 to 355 (QNYT…NYGD), and 357 to 386 (IFLIGGENAKGKPVSSVISFAMHDGKLLIE). Glu241 acts as the Proton acceptor in catalysis.

This sequence belongs to the NanM family. As to quaternary structure, homodimer.

It is found in the periplasm. It carries out the reaction N-acetyl-alpha-neuraminate = N-acetyl-beta-neuraminate. Functionally, converts alpha-N-acetylneuranimic acid (Neu5Ac) to the beta-anomer, accelerating the equilibrium between the alpha- and beta-anomers. Probably facilitates sialidase-negative bacteria to compete successfully for limited amounts of extracellular Neu5Ac, which is likely taken up in the beta-anomer. In addition, the rapid removal of sialic acid from solution might be advantageous to the bacterium to damp down host responses. This chain is N-acetylneuraminate epimerase, found in Salmonella arizonae (strain ATCC BAA-731 / CDC346-86 / RSK2980).